We begin with the raw amino-acid sequence, 394 residues long: Na(+)/H(+) antiporter NhaA (394 aa).

The next 11 membrane-spanning stretches (helical) occupy residues I17 to V37, L59 to V79, S95 to F115, V124 to L144, V154 to F174, T177 to L197, F213 to I233, F261 to L281, P287 to F307, I328 to L348, and L363 to V383.

Belongs to the NhaA Na(+)/H(+) (TC 2.A.33) antiporter family.

It localises to the cell inner membrane. The catalysed reaction is Na(+)(in) + 2 H(+)(out) = Na(+)(out) + 2 H(+)(in). Functionally, na(+)/H(+) antiporter that extrudes sodium in exchange for external protons. In Shewanella frigidimarina (strain NCIMB 400), this protein is Na(+)/H(+) antiporter NhaA.